The chain runs to 400 residues: Argininosuccinate synthase (400 aa).

An ATP-binding site is contributed by 9-17; it reads AYSGGLDTS. An L-citrulline-binding site is contributed by Y87. G117 is an ATP binding site. L-aspartate contacts are provided by T119, N123, and D124. Position 123 (N123) interacts with L-citrulline. 5 residues coordinate L-citrulline: R127, S176, S185, E261, and Y273.

This sequence belongs to the argininosuccinate synthase family. Type 1 subfamily. Homotetramer.

Its subcellular location is the cytoplasm. The enzyme catalyses L-citrulline + L-aspartate + ATP = 2-(N(omega)-L-arginino)succinate + AMP + diphosphate + H(+). It functions in the pathway amino-acid biosynthesis; L-arginine biosynthesis; L-arginine from L-ornithine and carbamoyl phosphate: step 2/3. The polypeptide is Argininosuccinate synthase (Chlorobium phaeobacteroides (strain DSM 266 / SMG 266 / 2430)).